The sequence spans 299 residues: 4-diphosphocytidyl-2-C-methyl-D-erythritol kinase (299 aa).

Lysine 18 is an active-site residue. ATP is bound at residue 104 to 114; it reads PIASGIGGGSS. Aspartate 146 is a catalytic residue.

Belongs to the GHMP kinase family. IspE subfamily.

It catalyses the reaction 4-CDP-2-C-methyl-D-erythritol + ATP = 4-CDP-2-C-methyl-D-erythritol 2-phosphate + ADP + H(+). Its pathway is isoprenoid biosynthesis; isopentenyl diphosphate biosynthesis via DXP pathway; isopentenyl diphosphate from 1-deoxy-D-xylulose 5-phosphate: step 3/6. Its function is as follows. Catalyzes the phosphorylation of the position 2 hydroxy group of 4-diphosphocytidyl-2C-methyl-D-erythritol. The chain is 4-diphosphocytidyl-2-C-methyl-D-erythritol kinase from Brucella melitensis biotype 1 (strain ATCC 23456 / CCUG 17765 / NCTC 10094 / 16M).